A 100-amino-acid polypeptide reads, in one-letter code: Urease subunit gamma (100 aa).

It belongs to the urease gamma subunit family. In terms of assembly, heterotrimer of UreA (gamma), UreB (beta) and UreC (alpha) subunits. Three heterotrimers associate to form the active enzyme.

The protein localises to the cytoplasm. It carries out the reaction urea + 2 H2O + H(+) = hydrogencarbonate + 2 NH4(+). The protein operates within nitrogen metabolism; urea degradation; CO(2) and NH(3) from urea (urease route): step 1/1. In Picosynechococcus sp. (strain ATCC 27264 / PCC 7002 / PR-6) (Agmenellum quadruplicatum), this protein is Urease subunit gamma.